Reading from the N-terminus, the 354-residue chain is UDP-N-acetylglucosamine--N-acetylmuramyl-(pentapeptide) pyrophosphoryl-undecaprenol N-acetylglucosamine transferase (354 aa).

UDP-N-acetyl-alpha-D-glucosamine-binding positions include serine 11–glycine 13, arginine 164, serine 194, and glutamine 289.

The protein belongs to the glycosyltransferase 28 family. MurG subfamily.

The protein localises to the cell membrane. The enzyme catalyses di-trans,octa-cis-undecaprenyl diphospho-N-acetyl-alpha-D-muramoyl-L-alanyl-D-glutamyl-meso-2,6-diaminopimeloyl-D-alanyl-D-alanine + UDP-N-acetyl-alpha-D-glucosamine = di-trans,octa-cis-undecaprenyl diphospho-[N-acetyl-alpha-D-glucosaminyl-(1-&gt;4)]-N-acetyl-alpha-D-muramoyl-L-alanyl-D-glutamyl-meso-2,6-diaminopimeloyl-D-alanyl-D-alanine + UDP + H(+). It functions in the pathway cell wall biogenesis; peptidoglycan biosynthesis. Cell wall formation. Catalyzes the transfer of a GlcNAc subunit on undecaprenyl-pyrophosphoryl-MurNAc-pentapeptide (lipid intermediate I) to form undecaprenyl-pyrophosphoryl-MurNAc-(pentapeptide)GlcNAc (lipid intermediate II). In Shouchella clausii (strain KSM-K16) (Alkalihalobacillus clausii), this protein is UDP-N-acetylglucosamine--N-acetylmuramyl-(pentapeptide) pyrophosphoryl-undecaprenol N-acetylglucosamine transferase.